The following is a 355-amino-acid chain: Ataxin-3 (355 aa).

Methionine 1 participates in a covalent cross-link: Peptide (Met-Gly) (interchain with G-Cter in ubiquitin). Positions 1–180 (MESIFHEKQE…DCEADQLLQM (180 aa)) constitute a Josephin domain. Catalysis depends on cysteine 14, which acts as the Nucleophile. The active-site Proton acceptor is the histidine 119. The active site involves asparagine 134. Lysine 200 participates in a covalent cross-link: Glycyl lysine isopeptide (Lys-Gly) (interchain with G-Cter in ubiquitin). UIM domains lie at 224–243 (DDED…IDME) and 244–263 (DEEA…SSRG). The segment at 257–333 (MQGSSRGMCE…AGNAMSEEDV (77 aa)) is disordered. Serine 268, serine 272, and serine 273 each carry phosphoserine. A compositionally biased stretch (basic and acidic residues) spans 279–301 (EELRKRREAYFEKQQHQQQEADR). The span at 312–326 (PTTSSGGLRSNQAGN) shows a compositional bias: polar residues. At serine 321 the chain carries Phosphoserine. Residues 329–348 (SEEDVLRATVTVSLETAKDS) form the UIM 3 domain.

In terms of assembly, interacts with STUB1/CHIP (when monoubiquitinated). Interacts with DNA repair proteins RAD23A and RAD23B. Interacts with BECN1 (via its poly-Gln domain). Interacts with PRKN, UBR2, VCP and tubulin. Monoubiquitinated by UBE2W, possibly leading to activate the deubiquitinating enzyme activity. As to expression, ubiquitously expressed.

It is found in the nucleus matrix. Its subcellular location is the nucleus. The protein localises to the lysosome membrane. The catalysed reaction is Thiol-dependent hydrolysis of ester, thioester, amide, peptide and isopeptide bonds formed by the C-terminal Gly of ubiquitin (a 76-residue protein attached to proteins as an intracellular targeting signal).. Its function is as follows. Deubiquitinating enzyme involved in protein homeostasis maintenance, transcription, cytoskeleton regulation, myogenesis and degradation of misfolded chaperone substrates. Binds long polyubiquitin chains and trims them, while it has weak or no activity against chains of 4 or less ubiquitins. Involved in degradation of misfolded chaperone substrates via its interaction with STUB1/CHIP: recruited to monoubiquitinated STUB1/CHIP, and restricts the length of ubiquitin chain attached to STUB1/CHIP substrates and preventing further chain extension. Interacts with key regulators of transcription and represses transcription: acts as a histone-binding protein that regulates transcription. Acts as a negative regulator of mTORC1 signaling in response to amino acid deprivation by mediating deubiquitination of RHEB, thereby promoting RHEB inactivation by the TSC-TBC complex. Regulates autophagy via the deubiquitination of 'Lys-402' of BECN1 leading to the stabilization of BECN1. The sequence is that of Ataxin-3 (Atxn3) from Rattus norvegicus (Rat).